Reading from the N-terminus, the 1551-residue chain is Pentafunctional AROM polypeptide (1551 aa).

A 3-dehydroquinate synthase region spans residues 1 to 379 (MSIEKVPILG…YQLKAHEVSK (379 aa)). NAD(+)-binding positions include 42 to 44 (DTN), 80 to 83 (ENNK), 111 to 113 (GGV), and Asp116. A 7-phospho-2-dehydro-3-deoxy-D-arabino-heptonate-binding site is contributed by Arg127. NAD(+) is bound at residue 136-137 (TT). 7-phospho-2-dehydro-3-deoxy-D-arabino-heptonate-binding residues include Asp143 and Lys149. Residue Lys158 coordinates NAD(+). Asn159 contacts 7-phospho-2-dehydro-3-deoxy-D-arabino-heptonate. NAD(+) contacts are provided by residues 176-179 (YLES) and Asn187. Glu191 lines the Zn(2+) pocket. 7-phospho-2-dehydro-3-deoxy-D-arabino-heptonate contacts are provided by residues 191–194 (EVVK) and Lys243. Glu253 functions as the Proton acceptor; for 3-dehydroquinate synthase activity in the catalytic mechanism. 7-phospho-2-dehydro-3-deoxy-D-arabino-heptonate contacts are provided by residues 257-261 (RNLLN) and His264. His264 is a Zn(2+) binding site. His268 serves as the catalytic Proton acceptor; for 3-dehydroquinate synthase activity. 7-phospho-2-dehydro-3-deoxy-D-arabino-heptonate-binding residues include His280 and Lys351. A Zn(2+)-binding site is contributed by His280. The segment at 392 to 838 (VHPFKQPPQE…WDILHSKFNI (447 aa)) is EPSP synthase. A shikimate kinase region spans residues 858-1048 (DKSIIIIGMR…IPSGRSAALS (191 aa)). 865-872 (GMRGTGKS) is a binding site for ATP. Residues 1049 to 1258 (LTVPDLNAIS…NEDGLLTIKE (210 aa)) are 3-dehydroquinase. The Schiff-base intermediate with substrate; for 3-dehydroquinate dehydratase activity role is filled by Lys1194. The tract at residues 1271–1551 (AKKFWVIGSP…DVIHRAVVEE (281 aa)) is shikimate dehydrogenase.

It in the N-terminal section; belongs to the sugar phosphate cyclases superfamily. Dehydroquinate synthase family. This sequence in the 2nd section; belongs to the EPSP synthase family. The protein in the 3rd section; belongs to the shikimate kinase family. In the 4th section; belongs to the type-I 3-dehydroquinase family. It in the C-terminal section; belongs to the shikimate dehydrogenase family. Homodimer. Requires Zn(2+) as cofactor.

The protein resides in the cytoplasm. It catalyses the reaction 7-phospho-2-dehydro-3-deoxy-D-arabino-heptonate = 3-dehydroquinate + phosphate. The enzyme catalyses 3-dehydroquinate = 3-dehydroshikimate + H2O. The catalysed reaction is shikimate + NADP(+) = 3-dehydroshikimate + NADPH + H(+). It carries out the reaction shikimate + ATP = 3-phosphoshikimate + ADP + H(+). It catalyses the reaction 3-phosphoshikimate + phosphoenolpyruvate = 5-O-(1-carboxyvinyl)-3-phosphoshikimate + phosphate. It functions in the pathway metabolic intermediate biosynthesis; chorismate biosynthesis; chorismate from D-erythrose 4-phosphate and phosphoenolpyruvate: step 2/7. The protein operates within metabolic intermediate biosynthesis; chorismate biosynthesis; chorismate from D-erythrose 4-phosphate and phosphoenolpyruvate: step 3/7. Its pathway is metabolic intermediate biosynthesis; chorismate biosynthesis; chorismate from D-erythrose 4-phosphate and phosphoenolpyruvate: step 4/7. It participates in metabolic intermediate biosynthesis; chorismate biosynthesis; chorismate from D-erythrose 4-phosphate and phosphoenolpyruvate: step 5/7. It functions in the pathway metabolic intermediate biosynthesis; chorismate biosynthesis; chorismate from D-erythrose 4-phosphate and phosphoenolpyruvate: step 6/7. Functionally, the AROM polypeptide catalyzes 5 consecutive enzymatic reactions in prechorismate polyaromatic amino acid biosynthesis. This Candida tropicalis (strain ATCC MYA-3404 / T1) (Yeast) protein is Pentafunctional AROM polypeptide.